A 505-amino-acid polypeptide reads, in one-letter code: MSEQHAQGADAVVDLNNELKTRREKLANLREQGIVFPNDFRRDHTSDQLHAEFDGKENEELEALNIEVAVAGRMMTRRIMGKASFVTLQDVGGRIQLYVARDDLPEGVYNEQFKKWDLGDILGAKGKLFKTKTGELSIHCTELRLLTKALRPLPDKFHGLQDQEARYRQRYLDLISNDESRNTFKVRSQILSGIRQFMVNRGFMEVETPMMQVIPGGAAARPFITHHNALDLDMYLRIAPELYLKRLVVGGFERVFEINRNFRNEGISVRHNPEFTMMELYMAYADYKDLIELTESLFRTLAQDILGKTEVTYGDVTLDFGKPFEKLTMREAIKKYRPETDMADLDNFDSAKAIAESIGIHVEKSWGLGRIVTEIFEEVAEAHLIQPTFITEYPAEVSPLARRNDINPEITDRFEFFIGGREIGNGFSELNDAEDQAQRFLDQVAAKDAGDDEAMFYDEDYVTALEHGLPPTAGLGIGIDRMVMLFTNSHTIRDVILFPAMRPVK.

Mg(2+) is bound by residues E415 and E422.

Belongs to the class-II aminoacyl-tRNA synthetase family. As to quaternary structure, homodimer. The cofactor is Mg(2+).

The protein localises to the cytoplasm. It carries out the reaction tRNA(Lys) + L-lysine + ATP = L-lysyl-tRNA(Lys) + AMP + diphosphate. This chain is Lysine--tRNA ligase, found in Shigella boydii serotype 4 (strain Sb227).